The primary structure comprises 1182 residues: Rho GTPase-activating protein 20 (1182 aa).

The segment at 1 to 40 (MEAMSPQQDALGAQPGRSSSLTGMSRIAGGPGTKKKMKTL) is disordered. Phosphoserine is present on serine 46. In terms of domain architecture, PH spans 86–187 (LLIDGPVELK…SLLQRYIALE (102 aa)). The 90-residue stretch at 194–283 (KSIPLKIFAK…TALLTQGSKD (90 aa)) folds into the Ras-associating domain. Positions 365 to 551 (VSLPDICEND…FLIENCCRIF (187 aa)) constitute a Rho-GAP domain. A phosphoserine mark is found at serine 704 and serine 730. Disordered regions lie at residues 744–791 (KQTQ…IQET), 932–953 (ASYS…SSQD), 981–1009 (QRKQ…GQAS), and 1140–1182 (EESG…GDRH). A compositionally biased stretch (polar residues) spans 757–775 (FKQSSVTGTDVSKRNTANE). A compositionally biased stretch (low complexity) spans 933–953 (SYSSLSSPGTSPSGSSVSSQD).

As to expression, highest expression is found in testis. Ubiquitously expressed in extragonadal tissues.

Its function is as follows. GTPase activator for the Rho-type GTPases by converting them to an inactive GDP-bound state. The protein is Rho GTPase-activating protein 20 (Arhgap20) of Rattus norvegicus (Rat).